The primary structure comprises 188 residues: Putative manganese efflux pump MntP (188 aa).

6 helical membrane passes run 3-23 (FYAL…VALA), 35-55 (IAAT…AGWV), 63-83 (FISE…GLKM), 107-127 (VLTA…LAFM), 131-151 (IAFA…VGLA), and 167-187 (AGGL…LGLI).

This sequence belongs to the MntP (TC 9.B.29) family.

Its subcellular location is the cell inner membrane. Probably functions as a manganese efflux pump. The chain is Putative manganese efflux pump MntP from Neisseria meningitidis serogroup A / serotype 4A (strain DSM 15465 / Z2491).